We begin with the raw amino-acid sequence, 175 residues long: Albumin-1 (175 aa).

An intrachain disulfide couples C135 to C141.

It belongs to the protease inhibitor I3 (leguminous Kunitz-type inhibitor) family.

In terms of biological role, 2S seed storage protein. The polypeptide is Albumin-1 (Psophocarpus tetragonolobus (Winged bean)).